Consider the following 506-residue polypeptide: ATP synthase subunit alpha (506 aa).

Gly-171 to Thr-178 is an ATP binding site.

The protein belongs to the ATPase alpha/beta chains family. F-type ATPases have 2 components, CF(1) - the catalytic core - and CF(0) - the membrane proton channel. CF(1) has five subunits: alpha(3), beta(3), gamma(1), delta(1), epsilon(1). CF(0) has four main subunits: a(1), b(1), b'(1) and c(9-12).

The protein resides in the cellular thylakoid membrane. The enzyme catalyses ATP + H2O + 4 H(+)(in) = ADP + phosphate + 5 H(+)(out). Produces ATP from ADP in the presence of a proton gradient across the membrane. The alpha chain is a regulatory subunit. The chain is ATP synthase subunit alpha from Nostoc sp. (strain PCC 7120 / SAG 25.82 / UTEX 2576).